Reading from the N-terminus, the 158-residue chain is MNNKTNNNSVLFDLADGAVRPLGFEVLEVTQQREGRDLIVLVRIDRLDEQPVTMDDLTAASRAAEAEFDRVDPIEEEYRLEFESPGGKRPLLRARHFERMIGLKAKVRSLPGRGEHNFTAPIKAVEGDTVTFEHGGEDLSVNVADIQASLAEFPDRHR.

The protein belongs to the RimP family.

Its subcellular location is the cytoplasm. Required for maturation of 30S ribosomal subunits. The sequence is that of Ribosome maturation factor RimP from Deinococcus radiodurans (strain ATCC 13939 / DSM 20539 / JCM 16871 / CCUG 27074 / LMG 4051 / NBRC 15346 / NCIMB 9279 / VKM B-1422 / R1).